Here is a 253-residue protein sequence, read N- to C-terminus: Uridylate kinase (253 aa).

9–12 contacts ATP; it reads KLSG. Residue Gly51 coordinates UMP. ATP contacts are provided by Gly52 and Arg56. UMP is bound by residues Asp72 and 133–140; that span reads SGNPFFTT. ATP-binding residues include Thr160, Tyr166, and Asp169.

This sequence belongs to the UMP kinase family. In terms of assembly, homohexamer.

The protein resides in the cytoplasm. The catalysed reaction is UMP + ATP = UDP + ADP. Its pathway is pyrimidine metabolism; CTP biosynthesis via de novo pathway; UDP from UMP (UMPK route): step 1/1. Its activity is regulated as follows. Inhibited by UTP. Functionally, catalyzes the reversible phosphorylation of UMP to UDP. The protein is Uridylate kinase of Synechococcus sp. (strain JA-2-3B'a(2-13)) (Cyanobacteria bacterium Yellowstone B-Prime).